Consider the following 365-residue polypeptide: MSAKRSIGDSEILKKRIPQNLKYQHIKTRLDTGNSMTKYLEKIEEIKKNYRYKKDELFKRIKVTTFAQLVLQVASVSEERESGEMTTDELQRLEDNSSVISDTEFLTDRTNGKGSPVNDSKSPIQFIDSERGEECIHTSRSTLQSVISGVGELDLGNQADKKKESLQSSSALDKPYEDCPFLLLDVRDRDSYDQCHVVGAKNYPVAMLSRTMNPFTPEILEYRNAHGKIIILYDEDERIASQAATTMCERGFENLFMLSGGLKVISQKFPQGLTTGSFPVTCLVPPTQMKSALKRTPKDPIVPAEDKWRFSSQDLEMIENHLENMLMSTSTPSRLRMDSRNSKVPSSASSARSQSSTSSHSKPWK.

The Rhodanese domain maps to 177–274 (EDCPFLLLDV…ISQKFPQGLT (98 aa)). Residues 327–365 (MSTSTPSRLRMDSRNSKVPSSASSARSQSSTSSHSKPWK) form a disordered region. Positions 342 to 365 (SKVPSSASSARSQSSTSSHSKPWK) are enriched in low complexity.

This sequence belongs to the CEP41 family.

Its subcellular location is the cytoplasm. It localises to the cytoskeleton. The protein resides in the microtubule organizing center. It is found in the centrosome. The protein localises to the cell projection. Its subcellular location is the cilium. It localises to the cilium basal body. In terms of biological role, required during ciliogenesis for tubulin glutamylation in cilium. Probably acts by participating in the transport of tubulin polyglutamylases between the basal body and the cilium. This Xenopus tropicalis (Western clawed frog) protein is Centrosomal protein of 41 kDa (cep41).